The following is a 720-amino-acid chain: Glycine--tRNA ligase beta subunit (720 aa).

This sequence belongs to the class-II aminoacyl-tRNA synthetase family. Tetramer of two alpha and two beta subunits.

It is found in the cytoplasm. The enzyme catalyses tRNA(Gly) + glycine + ATP = glycyl-tRNA(Gly) + AMP + diphosphate. In Acidovorax sp. (strain JS42), this protein is Glycine--tRNA ligase beta subunit.